The sequence spans 139 residues: MIIGVGSDLIDIRRVAKVIERHGDRFLNRIFTDAERAKAARRANNEKMAVATYAKRFAAKEACSKALGTGIRHGVWWRDMGVVNMPSGRPSMILTGGALRRLQMLTPQGLEVRIDLSLTDDWPLAQAFVIISAVTPGNL.

Mg(2+) is bound by residues aspartate 8 and glutamate 61.

Belongs to the P-Pant transferase superfamily. AcpS family. It depends on Mg(2+) as a cofactor.

Its subcellular location is the cytoplasm. It catalyses the reaction apo-[ACP] + CoA = holo-[ACP] + adenosine 3',5'-bisphosphate + H(+). Transfers the 4'-phosphopantetheine moiety from coenzyme A to a Ser of acyl-carrier-protein. The sequence is that of Holo-[acyl-carrier-protein] synthase from Nitrobacter hamburgensis (strain DSM 10229 / NCIMB 13809 / X14).